The following is a 212-amino-acid chain: MNIEIIPVTAFQQNCSLIWDDEKNAAIIDPGGEAERLIQRIEELDLNLKVLLLTHGHLDHVGAAMQLKQHFGVEIWGSNEKDKFLFESLPEQAQRFGLPNIDAFLPDRWFNQEGEILKLDGFNFEILHLPGHTPGHIGFIEHEKKVAFTGDVLFQGGIGRTDFPRGDYETLISSIRTKLLPLNDDIIIIAGHGSYTTIGQEKRSNPFLNSKS.

Positions 55, 57, 59, 60, 132, 151, and 192 each coordinate Zn(2+).

Belongs to the metallo-beta-lactamase superfamily. Glyoxalase II family. Zn(2+) is required as a cofactor.

It catalyses the reaction an S-(2-hydroxyacyl)glutathione + H2O = a 2-hydroxy carboxylate + glutathione + H(+). It carries out the reaction (R)-S-lactoylglutathione + H2O = (R)-lactate + glutathione + H(+). It participates in secondary metabolite metabolism; methylglyoxal degradation; (R)-lactate from methylglyoxal: step 2/2. Its function is as follows. Type II glyoxalase, isozyme of GloB, that hydrolyzes (R)-S-lactoylglutathione to (R)-lactate and glutathione. Plays a role in methylglyoxal (MG) detoxification. This chain is Hydroxyacylglutathione hydrolase GloC, found in Haemophilus influenzae (strain ATCC 51907 / DSM 11121 / KW20 / Rd).